A 201-amino-acid polypeptide reads, in one-letter code: Pyridoxal 5'-phosphate synthase subunit PdxT (201 aa).

Position 51 to 53 (51 to 53 (GES)) interacts with L-glutamine. The active-site Nucleophile is Cys83. Residues Arg112 and 141-142 (IR) contribute to the L-glutamine site. Active-site charge relay system residues include His182 and Glu184.

The protein belongs to the glutaminase PdxT/SNO family. In the presence of PdxS, forms a dodecamer of heterodimers. Only shows activity in the heterodimer.

It catalyses the reaction aldehydo-D-ribose 5-phosphate + D-glyceraldehyde 3-phosphate + L-glutamine = pyridoxal 5'-phosphate + L-glutamate + phosphate + 3 H2O + H(+). The catalysed reaction is L-glutamine + H2O = L-glutamate + NH4(+). The protein operates within cofactor biosynthesis; pyridoxal 5'-phosphate biosynthesis. Functionally, catalyzes the hydrolysis of glutamine to glutamate and ammonia as part of the biosynthesis of pyridoxal 5'-phosphate. The resulting ammonia molecule is channeled to the active site of PdxS. The chain is Pyridoxal 5'-phosphate synthase subunit PdxT from Thermobifida fusca (strain YX).